Here is a 474-residue protein sequence, read N- to C-terminus: Trifunctional enzyme subunit beta, mitochondrial (474 aa).

The N-terminal 33 residues, 1–33 (MTILTYPFKNLPTASKWALRFSIRPLSCSSQLR), are a transit peptide targeting the mitochondrion. Lys72 bears the N6-acetyllysine; alternate mark. Lys72 carries the post-translational modification N6-succinyllysine; alternate. Cys138 functions as the Acyl-thioester intermediate in the catalytic mechanism. An intramembrane segment occupies 173-220 (IRHSRKMRKLMLDLNKAKSMGQRLSLISKFRFNFLAPELPAVSEFSTS). Lys188 bears the N6-acetyllysine; alternate mark. Position 188 is an N6-succinyllysine; alternate (Lys188). 3 positions are modified to N6-succinyllysine: Lys190, Lys272, and Lys291. Lys293 bears the N6-acetyllysine; alternate mark. An N6-succinyllysine; alternate modification is found at Lys293. Lys298 bears the N6-acetyllysine mark. Lys332 is subject to N6-acetyllysine; alternate. At Lys332 the chain carries N6-succinyllysine; alternate. Lys348 and Lys361 each carry N6-acetyllysine. Cys458 acts as the Proton donor/acceptor in catalysis.

It belongs to the thiolase-like superfamily. Thiolase family. As to quaternary structure, heterotetramer of 2 alpha/HADHA and 2 beta/HADHB subunits; forms the mitochondrial trifunctional enzyme. Also purified as higher order heterooligomers including a 4 alpha/HADHA and 4 beta/HADHB heterooligomer which physiological significance remains unclear. The mitochondrial trifunctional enzyme interacts with MTLN. Interacts with RSAD2/viperin.

It localises to the mitochondrion. The protein resides in the mitochondrion inner membrane. It is found in the mitochondrion outer membrane. Its subcellular location is the endoplasmic reticulum. It carries out the reaction an acyl-CoA + acetyl-CoA = a 3-oxoacyl-CoA + CoA. It catalyses the reaction butanoyl-CoA + acetyl-CoA = 3-oxohexanoyl-CoA + CoA. The catalysed reaction is hexanoyl-CoA + acetyl-CoA = 3-oxooctanoyl-CoA + CoA. The enzyme catalyses octanoyl-CoA + acetyl-CoA = 3-oxodecanoyl-CoA + CoA. It carries out the reaction decanoyl-CoA + acetyl-CoA = 3-oxododecanoyl-CoA + CoA. It catalyses the reaction dodecanoyl-CoA + acetyl-CoA = 3-oxotetradecanoyl-CoA + CoA. The catalysed reaction is tetradecanoyl-CoA + acetyl-CoA = 3-oxohexadecanoyl-CoA + CoA. It functions in the pathway lipid metabolism; fatty acid beta-oxidation. Functionally, mitochondrial trifunctional enzyme catalyzes the last three of the four reactions of the mitochondrial beta-oxidation pathway. The mitochondrial beta-oxidation pathway is the major energy-producing process in tissues and is performed through four consecutive reactions breaking down fatty acids into acetyl-CoA. Among the enzymes involved in this pathway, the trifunctional enzyme exhibits specificity for long-chain fatty acids. Mitochondrial trifunctional enzyme is a heterotetrameric complex composed of two proteins, the trifunctional enzyme subunit alpha/HADHA carries the 2,3-enoyl-CoA hydratase and the 3-hydroxyacyl-CoA dehydrogenase activities, while the trifunctional enzyme subunit beta/HADHB described here bears the 3-ketoacyl-CoA thiolase activity. This Homo sapiens (Human) protein is Trifunctional enzyme subunit beta, mitochondrial (HADHB).